The chain runs to 295 residues: 15-cis-phytoene synthase (295 aa).

This sequence belongs to the phytoene/squalene synthase family. It depends on ATP as a cofactor. Mn(2+) is required as a cofactor.

It carries out the reaction 2 (2E,6E,10E)-geranylgeranyl diphosphate = 15-cis-phytoene + 2 diphosphate. It functions in the pathway carotenoid biosynthesis; phytoene biosynthesis. Its activity is regulated as follows. Significant inhibition is seen at GGPP concentrations above 100 uM. In terms of biological role, involved in the biosynthesis of carotenoids. Catalyzes stereoselectively the condensation of two molecules of geranylgeranyl diphosphate (GGPP) to give prephytoene diphosphate (PPPP) and the subsequent rearrangement of the cyclopropylcarbinyl intermediate to yield 15-cis-phytoene. This is 15-cis-phytoene synthase (crtB) from Enterobacter agglomerans (Erwinia herbicola).